Reading from the N-terminus, the 744-residue chain is CCR4-NOT transcription complex subunit 10 (744 aa).

Over residues 1-16 (MAADKPADQGAEKHEG) the composition is skewed to basic and acidic residues. The tract at residues 1-25 (MAADKPADQGAEKHEGTGQSSGITD) is disordered. Ala2 carries the post-translational modification N-acetylalanine. Residues 74-107 (KSNQTTTDNLRQTLNQLKNQVHSAVEEMDGLDDV) adopt a coiled-coil conformation. The segment covering 183–199 (NNNKNGKNETGNNNNKD) has biased composition (low complexity). 3 disordered regions span residues 183–204 (NNNK…SNHK), 477–521 (QDPK…PPSS), and 602–634 (VSLG…PQCY). A compositionally biased stretch (polar residues) spans 484–495 (GAKNSNQLGGNT). Over residues 496-506 (ESSESSETCSS) the composition is skewed to low complexity. The span at 602–612 (VSLGISSNEQD) shows a compositional bias: polar residues.

This sequence belongs to the CNOT10 family. Component of the CCR4-NOT complex; distinct complexes seem to exist that differ in the participation of probably mutually exclusive catalytic subunits. CNOT10 and CNOT11 form a subcomplex docked to the CNOT1 scaffold.

It is found in the cytoplasm. The protein localises to the nucleus. Its function is as follows. Component of the CCR4-NOT complex which is one of the major cellular mRNA deadenylases and is linked to various cellular processes including bulk mRNA degradation, miRNA-mediated repression, translational repression during translational initiation and general transcription regulation. Additional complex functions may be a consequence of its influence on mRNA expression. Is not required for association of CNOT7 to the CCR4-NOT complex. The sequence is that of CCR4-NOT transcription complex subunit 10 (CNOT10) from Homo sapiens (Human).